The following is a 555-amino-acid chain: MKDTVMAYLLENSIKFKGKPNPKAAMGKILGENPDLRSKVKEVNQVISEVVKEIETMSLEEQQAKLDELAPEGLGQKTERKRKEIELKNVKGNVVMRFAPNPSGPLHIGHARASVLNDFFTKKYNGKLVLRLEDTDAKRVLPEAYEMIQEDLKWLGVKVDEVIVQSERLETYYEYGRKLIEMGQAYVCDCDADEFRTLREQGTLCKCRDTIPEENLKLWEKMLAGELDNVAVRLKTDIAHKNPSIRDFPIFRIERTPHPKNGIKYHVYPLMNLSVTVDDHLLGMTHVLRGKDHIVNTEKQEYIYNYFGWEIPEYVHYGILKIEGPVLSTSKMHAGILSGEYSGWDDARLGTLRALRKRGIRPEALYKLMVEIGIKQADVRFAWENLYAANKDIIDKDARRFFFVESPKKLVISGADSRKIDLRMHPDRSELGNRELLFDGEIYVSDDLEAGKMYRLMELFNIVVEKVENDILYAKYDSDDFAIAKSNKASIIHWIPVKDSVPVTVIDENAEKIEGFAEKDFAVVKEDDFVQFERFGFVRIDEKVDNGYTCYLTHK.

Positions 100–110 (PNPSGPLHIGH) match the 'HIGH' region motif.

It belongs to the class-I aminoacyl-tRNA synthetase family. Glutamate--tRNA ligase type 2 subfamily.

It localises to the cytoplasm. It catalyses the reaction tRNA(Glu) + L-glutamate + ATP = L-glutamyl-tRNA(Glu) + AMP + diphosphate. In terms of biological role, catalyzes the attachment of glutamate to tRNA(Glu) in a two-step reaction: glutamate is first activated by ATP to form Glu-AMP and then transferred to the acceptor end of tRNA(Glu). The polypeptide is Glutamate--tRNA ligase (Methanococcus maripaludis (strain C5 / ATCC BAA-1333)).